The following is a 192-amino-acid chain: MGRIYFATTNLKKLKEIRSLFEADIVHMNIPMVEIQASLERIVDHKLNQVVPCIGEGDAVIVDDTAVAFEGLYGFPGVYIKDFLRIGSRKISEIVGKIGNSNATAFCCLGIAHYRDGRVVKKVFFGELEGSIVESKEDGLEGFDYIFLPSGSSMCLGDMPVDEKNRISHRRIASKKLADYMASVGIIKAHGS.

8-13 (TTNLKK) contributes to the ITP binding site. E34 lines the Mg(2+) pocket. ITP is bound by residues K46, 64–65 (DT), K81, 141–144 (EGFD), K164, and 169–170 (HR).

The protein belongs to the HAM1 NTPase family. In terms of assembly, homodimer. Mg(2+) serves as cofactor. The cofactor is Mn(2+).

The protein localises to the cytoplasm. It is found in the nucleus. The enzyme catalyses ITP + H2O = IMP + diphosphate + H(+). It catalyses the reaction dITP + H2O = dIMP + diphosphate + H(+). It carries out the reaction XTP + H2O = XMP + diphosphate + H(+). Functionally, pyrophosphatase that hydrolyzes non-canonical purine nucleotides such as inosine triphosphate (ITP), deoxyinosine triphosphate (dITP) or xanthosine 5'-triphosphate (XTP) to their respective monophosphate derivatives. The enzyme does not distinguish between the deoxy- and ribose forms. Probably excludes non-canonical purines from RNA and DNA precursor pools, thus preventing their incorporation into RNA and DNA and avoiding chromosomal lesions. In Encephalitozoon cuniculi (strain GB-M1) (Microsporidian parasite), this protein is Inosine triphosphate pyrophosphatase.